The sequence spans 375 residues: Peptide-N(4)-(N-acetyl-beta-glucosaminyl)asparagine amidase (375 aa).

Zn(2+) is bound by residues cysteine 129, cysteine 132, cysteine 163, and cysteine 166. Cysteine 189 (nucleophile) is an active-site residue. Residues histidine 219 and aspartate 236 contribute to the active site. Glutamate 239 is a binding site for substrate. A disordered region spans residues lysine 345–glutamate 375. The span at glutamate 364 to glutamate 375 shows a compositional bias: basic and acidic residues.

The protein belongs to the transglutaminase-like superfamily. PNGase family. It depends on Zn(2+) as a cofactor.

The protein localises to the cytoplasm. It carries out the reaction Hydrolysis of an N(4)-(acetyl-beta-D-glucosaminyl)asparagine residue in which the glucosamine residue may be further glycosylated, to yield a (substituted) N-acetyl-beta-D-glucosaminylamine and a peptide containing an aspartate residue.. Its function is as follows. Specifically deglycosylates the denatured form of N-linked glycoproteins in the cytoplasm and assists their proteasome-mediated degradation. Cleaves the beta-aspartyl-glucosamine (GlcNAc) of the glycan and the amide side chain of Asn, converting Asn to Asp. Prefers proteins containing high-mannose over those bearing complex type oligosaccharides. Can recognize misfolded proteins in the endoplasmic reticulum that are exported to the cytosol to be destroyed and deglycosylate them, while it has no activity toward native proteins. Deglycosylation is a prerequisite for subsequent proteasome-mediated degradation of some, but not all, misfolded glycoproteins. In Debaryomyces hansenii (strain ATCC 36239 / CBS 767 / BCRC 21394 / JCM 1990 / NBRC 0083 / IGC 2968) (Yeast), this protein is Peptide-N(4)-(N-acetyl-beta-glucosaminyl)asparagine amidase (PNG1).